A 153-amino-acid chain; its full sequence is NADPH-dependent 7-cyano-7-deazaguanine reductase (153 aa).

Residue Cys51 is the Thioimide intermediate of the active site. The active-site Proton donor is Asp58. Substrate is bound by residues 73–75 (VES) and 92–93 (HE).

The protein belongs to the GTP cyclohydrolase I family. QueF type 1 subfamily.

Its subcellular location is the cytoplasm. It carries out the reaction 7-aminomethyl-7-carbaguanine + 2 NADP(+) = 7-cyano-7-deazaguanine + 2 NADPH + 3 H(+). Its pathway is tRNA modification; tRNA-queuosine biosynthesis. Its function is as follows. Catalyzes the NADPH-dependent reduction of 7-cyano-7-deazaguanine (preQ0) to 7-aminomethyl-7-deazaguanine (preQ1). The polypeptide is NADPH-dependent 7-cyano-7-deazaguanine reductase (Granulibacter bethesdensis (strain ATCC BAA-1260 / CGDNIH1)).